The chain runs to 274 residues: tRNA pseudouridine synthase A (274 aa).

The active-site Nucleophile is D56. Y109 contacts substrate.

It belongs to the tRNA pseudouridine synthase TruA family.

The catalysed reaction is uridine(38/39/40) in tRNA = pseudouridine(38/39/40) in tRNA. Its function is as follows. Formation of pseudouridine at positions 38, 39 and 40 in the anticodon stem and loop of transfer RNAs. This Methanosphaera stadtmanae (strain ATCC 43021 / DSM 3091 / JCM 11832 / MCB-3) protein is tRNA pseudouridine synthase A.